The primary structure comprises 940 residues: Protein translocase subunit SecA (940 aa).

ATP-binding positions include glutamine 85, 103 to 107, and aspartate 505; that span reads GEGKT. Residues 851–940 are disordered; it reads PVQDGAERPS…KGGGGRRRKK (90 aa). The segment covering 855–865 has biased composition (basic and acidic residues); that stretch reads GAERPSLEKEG. Residues 928–940 are compositionally biased toward basic residues; that stretch reads RRRKGGGGRRRKK.

It belongs to the SecA family. In terms of assembly, monomer and homodimer. Part of the essential Sec protein translocation apparatus which comprises SecA, SecYEG and auxiliary proteins SecDF. Other proteins may also be involved.

The protein resides in the cell membrane. It is found in the cytoplasm. It carries out the reaction ATP + H2O + cellular proteinSide 1 = ADP + phosphate + cellular proteinSide 2.. Functionally, part of the Sec protein translocase complex. Interacts with the SecYEG preprotein conducting channel. Has a central role in coupling the hydrolysis of ATP to the transfer of proteins into and across the cell membrane, serving as an ATP-driven molecular motor driving the stepwise translocation of polypeptide chains across the membrane. The protein is Protein translocase subunit SecA of Streptomyces griseus.